The chain runs to 377 residues: Malate dehydrogenase, cytoplasmic (377 aa).

The Pro/N-degron motif lies at 2-5 (PHSV). Thr6 carries the post-translational modification Phosphothreonine. NAD(+)-binding positions include 20–26 (GAAGGIG) and Asp57. Substrate contacts are provided by Arg106 and Arg112. NAD(+) contacts are provided by residues Asn119 and 144–146 (ISN). Substrate contacts are provided by Asn146 and Arg185. Catalysis depends on His215, which acts as the Proton acceptor. Met266 is a binding site for NAD(+).

It belongs to the LDH/MDH superfamily. MDH type 1 family. As to quaternary structure, homodimer. Targeted for proteasomal degradation when cells are shifted to glucose-containing growth medium.

It localises to the cytoplasm. The catalysed reaction is (S)-malate + NAD(+) = oxaloacetate + NADH + H(+). Its function is as follows. The isoenzyme MDH2 may function primarily in the glyoxylate cycle. This is Malate dehydrogenase, cytoplasmic (MDH2) from Saccharomyces cerevisiae (strain ATCC 204508 / S288c) (Baker's yeast).